The primary structure comprises 356 residues: L-lactate dehydrogenase A (356 aa).

Residues 75-80 and Arg-121 contribute to the NAD(+) site; that span reads DALPDK. Residues Arg-128, Asn-160, and Arg-191 each contribute to the substrate site. NAD(+) is bound at residue Asn-160. The Proton acceptor role is filled by His-215. Residue Thr-270 participates in substrate binding.

Belongs to the LDH/MDH superfamily. LDH family. In terms of assembly, tetramer that arise from random association of LDH-A and LDH-B.

It carries out the reaction (S)-lactate + NAD(+) = pyruvate + NADH + H(+). It participates in fermentation; pyruvate fermentation to lactate; (S)-lactate from pyruvate: step 1/1. In Hordeum vulgare (Barley), this protein is L-lactate dehydrogenase A.